Here is a 315-residue protein sequence, read N- to C-terminus: MSEEKKQWSISDIEAIYQQPFNDLLYQAHTIHRTYHDPNSLQFATLLSIKTGACPEDCGYCSQSGHYKTHVEKEKLMSVEEVLQCAKEAKEGGAKRFCMGAAWRCPPDKAIPQLKEMIEGVKSLGLETCMTLGMLTKEQASHLKEAGLDYYNHNIDTSPSYYDKVVTTRKFSDRLDTLNNVRSAGINVCCGGILGLGETREDRIEFLLTLANMETPPESVPINRLIPVEGTPLAQAERVEGIELVRTIATARILMPKSAIRLTAGRTEMSDELQALCYFAGANSVFIGDKLLTEDNPQRFKDKTLFNKLGLTEMV.

A Radical SAM core domain is found at 39-266; sequence NSLQFATLLS…KSAIRLTAGR (228 aa). 3 residues coordinate [4Fe-4S] cluster: C54, C58, and C61. Residues C98, C129, C189, and R261 each contribute to the [2Fe-2S] cluster site.

It belongs to the radical SAM superfamily. Biotin synthase family. Homodimer. [4Fe-4S] cluster serves as cofactor. [2Fe-2S] cluster is required as a cofactor.

The catalysed reaction is (4R,5S)-dethiobiotin + (sulfur carrier)-SH + 2 reduced [2Fe-2S]-[ferredoxin] + 2 S-adenosyl-L-methionine = (sulfur carrier)-H + biotin + 2 5'-deoxyadenosine + 2 L-methionine + 2 oxidized [2Fe-2S]-[ferredoxin]. It participates in cofactor biosynthesis; biotin biosynthesis; biotin from 7,8-diaminononanoate: step 2/2. Catalyzes the conversion of dethiobiotin (DTB) to biotin by the insertion of a sulfur atom into dethiobiotin via a radical-based mechanism. The protein is Biotin synthase of Legionella pneumophila (strain Paris).